The following is a 420-amino-acid chain: Lactosylceramide alpha-2,3-sialyltransferase (420 aa).

A disordered region spans residues 1–39; it reads MRKKAAGGAERRPLKPRTEAAAAAPAGRAMPSDHSRMKL. The Cytoplasmic segment spans residues 1–67; sequence MRKKAAGGAE…MRRPNLLLKD (67 aa). Over residues 9 to 18 the composition is skewed to basic and acidic residues; the sequence is AERRPLKPRT. Positions 20-29 are enriched in low complexity; sequence AAAAAPAGRA. Residues 68 to 88 traverse the membrane as a helical segment; the sequence is ILKCTLLLFGVWILFYILKLN. Over 89–420 the chain is Lumenal; that stretch reads HTTEECDMKR…DLSGGIHSEF (332 aa). Cys-197 and Cys-355 form a disulfide bridge. Asn-238 carries N-linked (GlcNAc...) asparagine glycosylation.

Belongs to the glycosyltransferase 29 family.

Its subcellular location is the golgi apparatus membrane. The enzyme catalyses a beta-D-Gal-(1-&gt;4)-beta-D-Glc-(1&lt;-&gt;1)-Cer(d18:1(4E)) + CMP-N-acetyl-beta-neuraminate = a ganglioside GM3 (d18:1(4E)) + CMP + H(+). It carries out the reaction ganglioside GA2 (d18:1(4E)/18:0) + CMP-N-acetyl-beta-neuraminate = ganglioside GM2 (d18:1(4E)/18:0) + CMP + H(+). The catalysed reaction is a beta-D-Gal-(1&lt;-&gt;1')-ceramide + CMP-N-acetyl-beta-neuraminate = N-acetyl-alpha-neuraminosyl-(2-&gt;3)-beta-D-galactosyl-(1&lt;-&gt;1')-ceramide + CMP + H(+). It catalyses the reaction ganglioside GA1 (d18:1(4E)/18:0) + CMP-N-acetyl-beta-neuraminate = ganglioside GM1 (d18:1(4E)/18:0) + CMP + H(+). Functionally, transfers the sialyl group (N-acetyl-alpha-neuraminyl or NeuAc) from CMP-NeuAc to the non-reducing terminal galactose (Gal) of glycosphingolipids forming gangliosides (important molecules involved in the regulation of multiple cellular processes, including cell proliferation and differentiation, apoptosis, embryogenesis, development, and oncogenesis). Mainly involved in the biosynthesis of ganglioside GM3 but can also use different glycolipids as substrate acceptors such as D-galactosylceramide (GalCer), asialo-GM2 (GA2) and asialo-GM1 (GA1), although less preferentially than beta-D-Gal-(1-&gt;4)-beta-D-Glc-(1&lt;-&gt;1)-Cer (LacCer). This Bos taurus (Bovine) protein is Lactosylceramide alpha-2,3-sialyltransferase (ST3GAL5).